Here is a 211-residue protein sequence, read N- to C-terminus: Bifunctional transcriptional activator/DNA repair enzyme AdaA (211 aa).

The active-site Nucleophile; methyl group acceptor from methylphosphotriester is Cys-54. Zn(2+) contacts are provided by Cys-54, Cys-58, Cys-85, and Cys-88. The HTH araC/xylS-type domain maps to 102–200 (DLITEYIDKN…GQTPARFRQM (99 aa)). The H-T-H motif DNA-binding region spans 119–140 (ESLADICHGSPYHMHRTFKKIK).

It depends on Zn(2+) as a cofactor.

It catalyses the reaction (2'-deoxyribonucleoside 5'-methylphosphotriester)-DNA + L-cysteinyl-[protein] = 2'-deoxyribonucleotide-DNA + S-methyl-L-cysteinyl-[protein] + H(+). Is involved in the adaptive response to alkylation damage in DNA caused by alkylating agents. Repairs the methylphosphotriester lesions in DNA by a direct and irreversible transfer of the methyl group to one of its own cysteine residues. In terms of biological role, the methylation of AdaA by methylphosphotriesters in DNA leads to its activation as a transcriptional regulator that activates the transcription of the ada operon which consists of adaA and adaB, and of the adjacent gene alkA. This chain is Bifunctional transcriptional activator/DNA repair enzyme AdaA (adaA), found in Bacillus subtilis (strain 168).